A 409-amino-acid polypeptide reads, in one-letter code: 3-dehydro-bile acid delta(4,6)-reductase (409 aa).

FAD contacts are provided by Ser-12, Glu-33, Val-131, Glu-378, Asn-390, and Leu-391.

This sequence belongs to the BaiN/RdsA family. BaiN subfamily. FAD serves as cofactor.

It carries out the reaction 3-oxocholan-24-oyl-CoA + NAD(+) = 3-oxochol-4-en-24-oyl-CoA + NADH + H(+). The enzyme catalyses 3-oxochol-4-en-24-oyl-CoA + NAD(+) = 3-oxochol-4,6-dien-24-oyl-CoA + NADH + H(+). It catalyses the reaction 12alpha-hydroxy-3-oxocholan-24-oyl-CoA + NAD(+) = 12alpha-hydroxy-3-oxochol-4-en-24-oyl-CoA + NADH + H(+). The catalysed reaction is 12alpha-hydroxy-3-oxochol-4-en-24-oyl-CoA + NAD(+) = 12alpha-hydroxy-3-oxochola-4,6-dien-24-oyl-CoA + NADH + H(+). It participates in lipid metabolism; bile acid degradation. In terms of biological role, involved in the secondary bile acid metabolism. Catalyzes two subsequent reductions of the double bonds within the bile acid A/B rings of 3-oxochol-4,6-dien-24-oyl-CoA and 12alpha-hydroxy-3-oxochol-4,6-dien-24-oyl-CoA to yield 3-oxocholan-24-oyl-CoA and 12alpha-hydroxy-3-oxocholan-24-oyl-CoA, respectively. This Clostridium scindens (strain ATCC 35704 / DSM 5676 / VPI 13733 / 19) protein is 3-dehydro-bile acid delta(4,6)-reductase.